A 311-amino-acid chain; its full sequence is Methionyl-tRNA formyltransferase (311 aa).

110 to 113 is a (6S)-5,6,7,8-tetrahydrofolate binding site; sequence SLLP.

The protein belongs to the Fmt family.

It catalyses the reaction L-methionyl-tRNA(fMet) + (6R)-10-formyltetrahydrofolate = N-formyl-L-methionyl-tRNA(fMet) + (6S)-5,6,7,8-tetrahydrofolate + H(+). Attaches a formyl group to the free amino group of methionyl-tRNA(fMet). The formyl group appears to play a dual role in the initiator identity of N-formylmethionyl-tRNA by promoting its recognition by IF2 and preventing the misappropriation of this tRNA by the elongation apparatus. This is Methionyl-tRNA formyltransferase from Acidobacterium capsulatum (strain ATCC 51196 / DSM 11244 / BCRC 80197 / JCM 7670 / NBRC 15755 / NCIMB 13165 / 161).